Here is a 546-residue protein sequence, read N- to C-terminus: CTP synthase (546 aa).

An amidoligase domain region spans residues 1-269; that stretch reads MRSKKTKFIF…DERLAEVLNI (269 aa). Residue S17 participates in CTP binding. A UTP-binding site is contributed by S17. ATP-binding positions include 18–23 and D75; that span reads SLGKGL. D75 and E143 together coordinate Mg(2+). Residues 150–152, 190–195, and K226 each bind CTP; these read DIE and KTKPTQ. Residues 190 to 195 and K226 contribute to the UTP site; that span reads KTKPTQ. Residues 295–537 enclose the Glutamine amidotransferase type-1 domain; that stretch reads RIAIVGKYVN…IRAALAQRDA (243 aa). L-glutamine is bound at residue G357. C384 serves as the catalytic Nucleophile; for glutamine hydrolysis. Residues 385–388, E408, and R465 contribute to the L-glutamine site; that span reads LGLQ. Residues H510 and E512 contribute to the active site.

Belongs to the CTP synthase family. In terms of assembly, homotetramer.

The catalysed reaction is UTP + L-glutamine + ATP + H2O = CTP + L-glutamate + ADP + phosphate + 2 H(+). The enzyme catalyses L-glutamine + H2O = L-glutamate + NH4(+). It carries out the reaction UTP + NH4(+) + ATP = CTP + ADP + phosphate + 2 H(+). It functions in the pathway pyrimidine metabolism; CTP biosynthesis via de novo pathway; CTP from UDP: step 2/2. With respect to regulation, allosterically activated by GTP, when glutamine is the substrate; GTP has no effect on the reaction when ammonia is the substrate. The allosteric effector GTP functions by stabilizing the protein conformation that binds the tetrahedral intermediate(s) formed during glutamine hydrolysis. Inhibited by the product CTP, via allosteric rather than competitive inhibition. Its function is as follows. Catalyzes the ATP-dependent amination of UTP to CTP with either L-glutamine or ammonia as the source of nitrogen. Regulates intracellular CTP levels through interactions with the four ribonucleotide triphosphates. The sequence is that of CTP synthase from Myxococcus xanthus (strain DK1622).